The primary structure comprises 287 residues: Bifunctional protein FolD (287 aa).

Residues 166-168 (GAS) and Ile-232 contribute to the NADP(+) site.

It belongs to the tetrahydrofolate dehydrogenase/cyclohydrolase family. As to quaternary structure, homodimer.

The enzyme catalyses (6R)-5,10-methylene-5,6,7,8-tetrahydrofolate + NADP(+) = (6R)-5,10-methenyltetrahydrofolate + NADPH. It catalyses the reaction (6R)-5,10-methenyltetrahydrofolate + H2O = (6R)-10-formyltetrahydrofolate + H(+). It participates in one-carbon metabolism; tetrahydrofolate interconversion. Its function is as follows. Catalyzes the oxidation of 5,10-methylenetetrahydrofolate to 5,10-methenyltetrahydrofolate and then the hydrolysis of 5,10-methenyltetrahydrofolate to 10-formyltetrahydrofolate. This chain is Bifunctional protein FolD, found in Pectobacterium carotovorum subsp. carotovorum (strain PC1).